Here is a 500-residue protein sequence, read N- to C-terminus: Taxoid 7-beta-hydroxylase (500 aa).

A helical membrane pass occupies residues 24 to 44 (PAILSTALTAIAGIIVLLVIT). Cysteine 446 is a heme binding site.

It belongs to the cytochrome P450 family.

It is found in the microsome membrane. The enzyme catalyses taxusin + reduced [NADPH--hemoprotein reductase] + O2 = 7beta-hydroxytaxusin + oxidized [NADPH--hemoprotein reductase] + H2O + H(+). It catalyses the reaction 2alpha-hydroxytaxusin + reduced [NADPH--hemoprotein reductase] + O2 = 2alpha,7beta-dihydroxytaxusin + oxidized [NADPH--hemoprotein reductase] + H2O + H(+). The catalysed reaction is 7beta-hydroxytaxusin + reduced [NADPH--hemoprotein reductase] + O2 = 2alpha,7beta-dihydroxytaxusin + oxidized [NADPH--hemoprotein reductase] + H2O + H(+). It participates in alkaloid biosynthesis; taxol biosynthesis. Its function is as follows. Catalyzes the conversion of taxusin to 7-beta-hydroxytaxusin in taxol biosynthesis. Catalyzes the conversion of 2-alpha-hydroxytaxusin to 2-alpha-7-beta-hydroxytaxusin in taxol biosynthesis. The sequence is that of Taxoid 7-beta-hydroxylase from Taxus cuspidata (Japanese yew).